We begin with the raw amino-acid sequence, 87 residues long: MEPIFIIGIILGLVILLFLSGSAAKPLKWIGITAVKFVAGALLLVCVNMFGGSLGIHVPINLVTTAISGILGIPGIAALVVIKQFII.

The Forespore intermembrane space segment spans residues 1 to 2 (ME). The helical transmembrane segment at 3–23 (PIFIIGIILGLVILLFLSGSA) threads the bilayer. The Cytoplasmic segment spans residues 24–36 (AKPLKWIGITAVK). The chain crosses the membrane as a helical span at residues 37-57 (FVAGALLLVCVNMFGGSLGIH). A Zn(2+)-binding site is contributed by His57. At 58–87 (VPINLVTTAISGILGIPGIAALVVIKQFII) the chain is on the forespore intermembrane space side.

In terms of assembly, forms a complex with SpoIVFA and SpoIVFB localized in the mother cell membrane surrounding the forespore.

It localises to the forespore outer membrane. In terms of biological role, involved in the mediation of the intercompartmental coupling of pro-sigma K processing to events in the forespore. Inhibits SpoIVFB-processing activity until a signal has been received from the forespore. Could inhibit SpoIVFB metalloprotease activity by coordinating a zinc in the SpoIVFB active site, preventing access of a water molecule and the sequence of pro-sigma K, which are necessary for peptide bond hydrolysis to produce sigma-K. The sequence is that of Sigma-K factor-processing regulatory protein BofA (bofA) from Bacillus subtilis (strain 168).